A 940-amino-acid polypeptide reads, in one-letter code: Phosphoenolpyruvate carboxylase (940 aa).

Catalysis depends on residues His138 and Lys603.

This sequence belongs to the PEPCase type 1 family. Mg(2+) is required as a cofactor.

It carries out the reaction oxaloacetate + phosphate = phosphoenolpyruvate + hydrogencarbonate. Forms oxaloacetate, a four-carbon dicarboxylic acid source for the tricarboxylic acid cycle. This chain is Phosphoenolpyruvate carboxylase, found in Streptococcus thermophilus (strain ATCC BAA-250 / LMG 18311).